Consider the following 46-residue polypeptide: Small polypeptide DEVIL 5 (46 aa).

The chain crosses the membrane as a helical span at residues 8–24 (VGGTKRKMWSRGVGGVV). Residues 15–46 (MWSRGVGGVVREQKAKLYIIRRCVVMLLCWHD) are required for DVL/RTFL small polypeptide activity.

Belongs to the DVL/RTFL small polypeptides family. In terms of tissue distribution, mostly expressed in roots and flowers, and, to a lower extent, in leaves and stems.

The protein resides in the cell membrane. Functionally, small polypeptide acting as a regulatory molecule which coordinates cellular responses required for differentiation, growth and development, including leaves shape, pedicule elongation, inflorescence organization and fruit maturation, probably by restricting polar cell proliferation in lateral organs and coordinating socket cell recruitment and differentiation at trichome sites. This Arabidopsis thaliana (Mouse-ear cress) protein is Small polypeptide DEVIL 5.